The following is a 68-amino-acid chain: Prokaryotic ubiquitin-like protein Pup (68 aa).

Positions 1–37 (MAQERIFGTGSRREDEPDTPAPVDPPVSGAAQAQRDM) are disordered. The ARC ATPase binding stretch occupies residues 24–62 (DPPVSGAAQAQRDMQGTDDLLAEIDGVLETNAEAFVKGF). Glutamine 68 bears the Deamidated glutamine mark. Glutamine 68 participates in a covalent cross-link: Isoglutamyl lysine isopeptide (Gln-Lys) (interchain with K-? in acceptor proteins).

The protein belongs to the prokaryotic ubiquitin-like protein family. As to quaternary structure, strongly interacts with the proteasome-associated ATPase ARC through a hydrophobic interface; the interacting region of Pup lies in its C-terminal half. There is one Pup binding site per ARC hexamer ring. Post-translationally, is modified by deamidation of its C-terminal glutamine to glutamate by the deamidase Dop, a prerequisite to the subsequent pupylation process.

The protein operates within protein degradation; proteasomal Pup-dependent pathway. Its function is as follows. Protein modifier that is covalently attached to lysine residues of substrate proteins, thereby targeting them for proteasomal degradation. The tagging system is termed pupylation. This is Prokaryotic ubiquitin-like protein Pup from Kocuria rhizophila (strain ATCC 9341 / DSM 348 / NBRC 103217 / DC2201).